Consider the following 33-residue polypeptide: Photosystem II reaction center protein Psb30 (33 aa).

A helical transmembrane segment spans residues leucine 5–leucine 25.

It belongs to the Psb30/Ycf12 family. PSII is composed of 1 copy each of membrane proteins PsbA, PsbB, PsbC, PsbD, PsbE, PsbF, PsbH, PsbI, PsbJ, PsbK, PsbL, PsbM, PsbT, PsbX, PsbY, PsbZ, Psb30/Ycf12, peripheral proteins of the oxygen-evolving complex and a large number of cofactors. It forms dimeric complexes.

It is found in the plastid. Its subcellular location is the chloroplast thylakoid membrane. Functionally, a core subunit of photosystem II (PSII), probably helps stabilize the reaction center. In Lepocinclis buetschlii, this protein is Photosystem II reaction center protein Psb30.